Here is a 178-residue protein sequence, read N- to C-terminus: MTQMSPSDVPSMGRRQFMNLLTFGTATGVALGALYPVANFFMPLRAGGGTGGTTAKDELGNAVTATGWLSNHPAGDRSLVQGLKGDPTYLIVDGDAAIGNFGINAICTHLGCVVPWNSGANKYICPCHGSQYDANGKVVRGPAPLSLALTHIDIDDDNVLVSQWTETDFRTGDKPWWA.

A helical transmembrane segment spans residues 20–42 (LLTFGTATGVALGALYPVANFFM). Positions 71 to 161 (NHPAGDRSLV…IDIDDDNVLV (91 aa)) constitute a Rieske domain. The [2Fe-2S] cluster site is built by C107, H109, C125, and H128. C112 and C127 form a disulfide bridge.

This sequence belongs to the Rieske iron-sulfur protein family. As to quaternary structure, the 4 large subunits of the cytochrome b6-f complex are cytochrome b6, subunit IV (17 kDa polypeptide, PetD), cytochrome f and the Rieske protein, while the 4 small subunits are PetG, PetL, PetM and PetN. The complex functions as a dimer. Requires [2Fe-2S] cluster as cofactor.

The protein localises to the cellular thylakoid membrane. The catalysed reaction is 2 oxidized [plastocyanin] + a plastoquinol + 2 H(+)(in) = 2 reduced [plastocyanin] + a plastoquinone + 4 H(+)(out). Its function is as follows. Component of the cytochrome b6-f complex, which mediates electron transfer between photosystem II (PSII) and photosystem I (PSI), cyclic electron flow around PSI, and state transitions. In Prochlorococcus marinus (strain SARG / CCMP1375 / SS120), this protein is Cytochrome b6-f complex iron-sulfur subunit.